Consider the following 196-residue polypeptide: Molybdenum cofactor guanylyltransferase (196 aa).

Residues 10–12, lysine 23, asparagine 51, aspartate 69, and aspartate 99 each bind GTP; that span reads LAG. Aspartate 99 serves as a coordination point for Mg(2+).

The protein belongs to the MobA family. In terms of assembly, monomer. Mg(2+) is required as a cofactor.

The protein resides in the cytoplasm. It catalyses the reaction Mo-molybdopterin + GTP + H(+) = Mo-molybdopterin guanine dinucleotide + diphosphate. Transfers a GMP moiety from GTP to Mo-molybdopterin (Mo-MPT) cofactor (Moco or molybdenum cofactor) to form Mo-molybdopterin guanine dinucleotide (Mo-MGD) cofactor. This Shewanella amazonensis (strain ATCC BAA-1098 / SB2B) protein is Molybdenum cofactor guanylyltransferase.